We begin with the raw amino-acid sequence, 103 residues long: UPF0145 protein Dred_2155 (103 aa).

It belongs to the UPF0145 family.

This chain is UPF0145 protein Dred_2155, found in Desulforamulus reducens (strain ATCC BAA-1160 / DSM 100696 / MI-1) (Desulfotomaculum reducens).